The following is an 879-amino-acid chain: Alanine--tRNA ligase (879 aa).

H566, H570, C668, and H672 together coordinate Zn(2+).

The protein belongs to the class-II aminoacyl-tRNA synthetase family. Requires Zn(2+) as cofactor.

The protein localises to the cytoplasm. The catalysed reaction is tRNA(Ala) + L-alanine + ATP = L-alanyl-tRNA(Ala) + AMP + diphosphate. Functionally, catalyzes the attachment of alanine to tRNA(Ala) in a two-step reaction: alanine is first activated by ATP to form Ala-AMP and then transferred to the acceptor end of tRNA(Ala). Also edits incorrectly charged Ser-tRNA(Ala) and Gly-tRNA(Ala) via its editing domain. This chain is Alanine--tRNA ligase, found in Listeria monocytogenes serotype 4b (strain F2365).